The primary structure comprises 452 residues: Pup--protein ligase (452 aa).

Position 9 (Glu9) interacts with Mg(2+). Arg53 is a binding site for ATP. Tyr55 provides a ligand contact to Mg(2+). The active-site Proton acceptor is the Asp57. Position 63 (Glu63) interacts with Mg(2+). ATP-binding residues include Thr66 and Trp419.

Belongs to the Pup ligase/Pup deamidase family. Pup-conjugating enzyme subfamily. Pupylated at an undetermined lysine residue by the prokaryotic ubiquitin-like protein Pup, which leads to its degradation by the proteasome and thereby constitutes a negative auto-regulation.

The enzyme catalyses ATP + [prokaryotic ubiquitin-like protein]-L-glutamate + [protein]-L-lysine = ADP + phosphate + N(6)-([prokaryotic ubiquitin-like protein]-gamma-L-glutamyl)-[protein]-L-lysine.. It functions in the pathway protein degradation; proteasomal Pup-dependent pathway. The protein operates within protein modification; protein pupylation. Functionally, catalyzes the covalent attachment of the prokaryotic ubiquitin-like protein modifier Pup to the proteasomal substrate proteins, thereby targeting them for proteasomal degradation. This tagging system is termed pupylation. The ligation reaction likely involves the side-chain carboxylate of the C-terminal glutamate of Pup and the side-chain amino group of a substrate lysine. The polypeptide is Pup--protein ligase (pafA) (Mycolicibacterium smegmatis (strain ATCC 700084 / mc(2)155) (Mycobacterium smegmatis)).